The chain runs to 545 residues: MTTRYIFVTGGVVSSLGKGIAAASLAAILEARGLNVTMMKLDPYINVDPGTMSPTQHGEVFVTEDGAETDLDLGHYERFIRTKMNRRNNFTTGRIYEEVLRKERRGDYLGATIQIIPHITNAIKEKVLAGGEGHDVAIVEIGGTVGDIESLPFLESIRQLSVELGRERSLFMHLTLVPFLGAAGEVKTKPTQHSVKELRSIGIAPDVLVCRGDRPVPANEKAKISLFCNVEERAVISLKDVDSIYKIPALLKAQGLDELVVKRFGITCPEADLHEWEQVIYQEANPTGEVTIGMVGKYIELPDAYKSVNEALKHAGLFNRVSVNIKYIDSQTVEAKGEEVLQGLDGILVPGGFGERGVEGKILAAKYARENNLPYFGICLGLQVALIEFARHVAGLEGAHSTEFNKETPHPVVGLITEWINEEGNVEQRHETSDLGGTMRLGAQLCHLSEGSKAAISYDGNTCVERHRHRYEVNNNYKDRLEKAGLVFSGLSSDRQLVEMIELPNHPWFVAGQFHPEFTSTPRDGQPLFVGFVAAATAYQKRDLG.

Residues 1-266 are amidoligase domain; it reads MTTRYIFVTG…DELVVKRFGI (266 aa). Ser14 is a CTP binding site. Position 14 (Ser14) interacts with UTP. Residues 15 to 20 and Asp72 contribute to the ATP site; that span reads SLGKGI. Mg(2+) contacts are provided by Asp72 and Glu140. CTP contacts are provided by residues 147 to 149, 187 to 192, and Lys223; these read DIE and KTKPTQ. Residues 187–192 and Lys223 each bind UTP; that span reads KTKPTQ. 239–241 serves as a coordination point for ATP; it reads KDV. The Glutamine amidotransferase type-1 domain maps to 291-542; that stretch reads TIGMVGKYIE…VAAATAYQKR (252 aa). L-glutamine is bound at residue Gly352. The active-site Nucleophile; for glutamine hydrolysis is Cys379. Residues 380 to 383, Glu403, and Arg470 each bind L-glutamine; that span reads LGLQ. Residues His515 and Glu517 contribute to the active site.

The protein belongs to the CTP synthase family. As to quaternary structure, homotetramer.

The enzyme catalyses UTP + L-glutamine + ATP + H2O = CTP + L-glutamate + ADP + phosphate + 2 H(+). It carries out the reaction L-glutamine + H2O = L-glutamate + NH4(+). It catalyses the reaction UTP + NH4(+) + ATP = CTP + ADP + phosphate + 2 H(+). It functions in the pathway pyrimidine metabolism; CTP biosynthesis via de novo pathway; CTP from UDP: step 2/2. With respect to regulation, allosterically activated by GTP, when glutamine is the substrate; GTP has no effect on the reaction when ammonia is the substrate. The allosteric effector GTP functions by stabilizing the protein conformation that binds the tetrahedral intermediate(s) formed during glutamine hydrolysis. Inhibited by the product CTP, via allosteric rather than competitive inhibition. Catalyzes the ATP-dependent amination of UTP to CTP with either L-glutamine or ammonia as the source of nitrogen. Regulates intracellular CTP levels through interactions with the four ribonucleotide triphosphates. In Shewanella sediminis (strain HAW-EB3), this protein is CTP synthase.